The chain runs to 262 residues: Flap endonuclease Xni (262 aa).

Asp-105 is a Mg(2+) binding site. Residues 162–254 (ERSQFLDLMA…LKDFRVIDSL (93 aa)) form the 5'-3' exonuclease domain. Positions 172, 173, 181, 183, and 186 each coordinate K(+). The tract at residues 185 to 190 (GIGPKS) is interaction with DNA.

This sequence belongs to the Xni family. Mg(2+) serves as cofactor. Requires K(+) as cofactor.

Has flap endonuclease activity. During DNA replication, flap endonucleases cleave the 5'-overhanging flap structure that is generated by displacement synthesis when DNA polymerase encounters the 5'-end of a downstream Okazaki fragment. This Shewanella baltica (strain OS195) protein is Flap endonuclease Xni.